Reading from the N-terminus, the 630-residue chain is Amino acid transporter heavy chain SLC3A2 (630 aa).

Met-1 carries the N-acetylmethionine modification. Position 2 is an N-acetylserine (Glu-2). The residue at position 2 (Glu-2) is a Phosphoserine. The segment at 15–39 (IPRQLPGSHSEAGVQGLSAGDDSEL) is disordered. Over 102–184 (MSQDTEVDMK…SPGWVRTRWA (83 aa)) the chain is Cytoplasmic. The residue at position 103 (Ser-103) is a Phosphoserine. At Thr-106 the chain carries Phosphothreonine. Phosphoserine is present on Ser-134. Lys-147 is covalently cross-linked (Glycyl lysine isopeptide (Lys-Gly) (interchain with G-Cter in ubiquitin)). The residue at position 165 (Ser-165) is a Phosphoserine. Lys-166 participates in a covalent cross-link: Glycyl lysine isopeptide (Lys-Gly) (interchain with G-Cter in SUMO2). A helical; Signal-anchor for type II membrane protein transmembrane segment spans residues 185–205 (LLLLFWLGWLGMLAGAVVIIV). The Extracellular segment spans residues 206–630 (RAPRCRELPA…GLLLRFPYAA (425 aa)). Asn-365 and Asn-381 each carry an N-linked (GlcNAc...) asparagine glycan. Phosphoserine occurs at positions 406, 408, and 410. The N-linked (GlcNAc...) (complex) asparagine glycan is linked to Asn-424. Asn-506 is a glycosylation site (N-linked (GlcNAc...) asparagine). Ser-527 and Ser-531 each carry phosphoserine.

In terms of assembly, disulfide-linked heterodimer with a non-glycosylated catalytic light subunit (SLC7A5, SLC7A6, SLC7A7, SLC7A8, SLC7A10 or SLC7A11). Interacts with TLCD3A/CT120. Interacts with ICAM1. Constitutively and specifically associates with beta-1 integrins (alpha-2/beta-1, alpha-3/beta-1, alpha-5/beta-1 and alpha-6/beta-1), but minimally with alpha-4/beta-1. Interacts with LAPTM4B; recruits SLC3A2 and SLC7A5/LAT1 to lysosomes to promote leucine uptake into these organelles and is required for mTORC1 activation. (Microbial infection) Interacts with hepatitis C virus/HCV envelope glycoprotein E2; the interaction may facilitate viral entry into host cell. Post-translationally, N-glycosylated; N-glycosylation is crucial for trafficking and stability of SLC3A2 to the plasma membrane. Phosphorylation on Ser-406; Ser-408 or Ser-410 and on Ser-527 or Ser-531 by ecto-protein kinases favors heterotypic cell-cell interactions. As to expression, expressed ubiquitously in all tissues tested with highest levels detected in kidney, placenta and testis and weakest level in thymus. During gestation, expression in the placenta was significantly stronger at full-term than at the mid-trimester stage. Expressed in HUVECS and at low levels in resting peripheral blood T-lymphocytes and quiescent fibroblasts. Also expressed in fetal liver and in the astrocytic process of primary astrocytic gliomas. Expressed in retinal endothelial cells and in the intestinal epithelial cell line C2BBe1.

The protein resides in the apical cell membrane. The protein localises to the cell membrane. Its subcellular location is the cell junction. It is found in the lysosome membrane. It localises to the melanosome. The protein resides in the basolateral cell membrane. Functionally, acts as a chaperone that facilitates biogenesis and trafficking of functional transporters heterodimers to the plasma membrane. Forms heterodimer with SLC7 family transporters (SLC7A5, SLC7A6, SLC7A7, SLC7A8, SLC7A10 and SLC7A11), a group of amino-acid antiporters. Heterodimers function as amino acids exchangers, the specificity of the substrate depending on the SLC7A subunit. Heterodimers SLC3A2/SLC7A6 or SLC3A2/SLC7A7 mediate the uptake of dibasic amino acids. Heterodimer SLC3A2/SLC7A11 functions as an antiporter by mediating the exchange of extracellular anionic L-cystine and intracellular L-glutamate across the cellular plasma membrane. SLC3A2/SLC7A10 translocates small neutral L- and D-amino acids across the plasma membrane. SLC3A2/SLC75 or SLC3A2/SLC7A8 translocates neutral amino acids with broad specificity, thyroid hormones and L-DOPA. SLC3A2 is essential for plasma membrane localization, stability, and the transport activity of SLC7A5 and SLC7A8. When associated with LAPTM4B, the heterodimer SLC7A5 is recruited to lysosomes to promote leucine uptake into these organelles, and thereby mediates mTORC1 activation. Modulates integrin-related signaling and is essential for integrin-dependent cell spreading, migration and tumor progression. (Microbial infection) In case of hepatitis C virus/HCV infection, the complex formed by SLC3A2 and SLC7A5/LAT1 plays a role in HCV propagation by facilitating viral entry into host cell and increasing L-leucine uptake-mediated mTORC1 signaling activation, thereby contributing to HCV-mediated pathogenesis. Its function is as follows. (Microbial infection) Acts as a receptor for malaria parasite Plasmodium vivax (Thai isolate) in immature red blood cells. In Homo sapiens (Human), this protein is Amino acid transporter heavy chain SLC3A2.